A 170-amino-acid chain; its full sequence is MIYMVSVSMMVLVLGLVAVASNPSPFYAALGLVLAAGAGCLVIVSFGSSFLSIVLFLIYLGGMLVVFAYSAARAKPYPEAWGSWSVVFYVLVYLIGVLVWYLFLGGVEVDGMNKSSELGSYVMRGDWVGVALMYSCWWVIIVYWWVSIIINFVCGIWVNSKSMWWESSCV.

5 helical membrane passes run 1-21 (MIYM…AVAS), 26-46 (FYAA…IVSF), 49-69 (SFLS…VFAY), 86-106 (VVFY…FLGG), and 138-158 (WVII…GIWV).

Belongs to the complex I subunit 6 family. Core subunit of respiratory chain NADH dehydrogenase (Complex I) which is composed of 45 different subunits.

Its subcellular location is the mitochondrion inner membrane. It carries out the reaction a ubiquinone + NADH + 5 H(+)(in) = a ubiquinol + NAD(+) + 4 H(+)(out). In terms of biological role, core subunit of the mitochondrial membrane respiratory chain NADH dehydrogenase (Complex I) which catalyzes electron transfer from NADH through the respiratory chain, using ubiquinone as an electron acceptor. Essential for the catalytic activity and assembly of complex I. The chain is NADH-ubiquinone oxidoreductase chain 6 (mt-nd6) from Xenopus laevis (African clawed frog).